Here is a 443-residue protein sequence, read N- to C-terminus: ATP-dependent protease ATPase subunit HslU (443 aa).

Residues I18, G60 to E65, D256, E321, and R393 contribute to the ATP site.

It belongs to the ClpX chaperone family. HslU subfamily. As to quaternary structure, a double ring-shaped homohexamer of HslV is capped on each side by a ring-shaped HslU homohexamer. The assembly of the HslU/HslV complex is dependent on binding of ATP.

Its subcellular location is the cytoplasm. Its function is as follows. ATPase subunit of a proteasome-like degradation complex; this subunit has chaperone activity. The binding of ATP and its subsequent hydrolysis by HslU are essential for unfolding of protein substrates subsequently hydrolyzed by HslV. HslU recognizes the N-terminal part of its protein substrates and unfolds these before they are guided to HslV for hydrolysis. The chain is ATP-dependent protease ATPase subunit HslU from Escherichia coli O157:H7 (strain EC4115 / EHEC).